Consider the following 454-residue polypeptide: CCA-adding enzyme (454 aa).

Residues serine 59 and arginine 62 each contribute to the ATP site. CTP contacts are provided by serine 59 and arginine 62. Mg(2+) is bound by residues aspartate 71, aspartate 73, and aspartate 125. The ATP site is built by histidine 148, lysine 167, and tyrosine 176. 3 residues coordinate CTP: histidine 148, lysine 167, and tyrosine 176.

This sequence belongs to the tRNA nucleotidyltransferase/poly(A) polymerase family. Archaeal CCA-adding enzyme subfamily. In terms of assembly, homodimer. Mg(2+) is required as a cofactor.

The catalysed reaction is a tRNA precursor + 2 CTP + ATP = a tRNA with a 3' CCA end + 3 diphosphate. The enzyme catalyses a tRNA with a 3' CCA end + 2 CTP + ATP = a tRNA with a 3' CCACCA end + 3 diphosphate. Functionally, catalyzes the addition and repair of the essential 3'-terminal CCA sequence in tRNAs without using a nucleic acid template. Adds these three nucleotides in the order of C, C, and A to the tRNA nucleotide-73, using CTP and ATP as substrates and producing inorganic pyrophosphate. tRNA 3'-terminal CCA addition is required both for tRNA processing and repair. Also involved in tRNA surveillance by mediating tandem CCA addition to generate a CCACCA at the 3' terminus of unstable tRNAs. While stable tRNAs receive only 3'-terminal CCA, unstable tRNAs are marked with CCACCA and rapidly degraded. The chain is CCA-adding enzyme from Methanosarcina mazei (strain ATCC BAA-159 / DSM 3647 / Goe1 / Go1 / JCM 11833 / OCM 88) (Methanosarcina frisia).